The chain runs to 254 residues: Glutamate racemase (254 aa).

Residues 7-8 (DS) and 39-40 (YG) each bind substrate. The Proton donor/acceptor role is filled by Cys-70. Substrate contacts are provided by residues 71 to 72 (NT) and Glu-147. Catalysis depends on Cys-178, which acts as the Proton donor/acceptor. 179-180 (TH) provides a ligand contact to substrate.

This sequence belongs to the aspartate/glutamate racemases family. In terms of assembly, homodimer.

It carries out the reaction L-glutamate = D-glutamate. Its pathway is cell wall biogenesis; peptidoglycan biosynthesis. Provides the (R)-glutamate required for cell wall biosynthesis. Converts L- or D-glutamate to D- or L-glutamate, respectively, but not other amino acids such as alanine, aspartate, and glutamine. In Aquifex pyrophilus, this protein is Glutamate racemase.